The primary structure comprises 161 residues: Allophycocyanin beta chain (161 aa).

Asparagine 71 is modified (N4-methylasparagine). Cysteine 81 is a (2R,3E)-phycocyanobilin binding site.

Belongs to the phycobiliprotein family. In terms of assembly, heterodimer of an alpha and a beta chain. In terms of processing, contains one covalently linked phycocyanobilin chromophore.

It localises to the cellular thylakoid membrane. In terms of biological role, light-harvesting photosynthetic bile pigment-protein from the phycobiliprotein complex. Allophycocyanin has a maximum absorption at approximately 650 nanometers. In Anabaena variabilis, this protein is Allophycocyanin beta chain (apcB).